A 300-amino-acid polypeptide reads, in one-letter code: Protein SPEAR4 (300 aa).

A compositionally biased stretch (polar residues) spans 1-10; that stretch reads MCSKTSSVSY. The segment at 1 to 45 is disordered; that stretch reads MCSKTSSVSYGNREDDDNYSSLCPKKQKHNNGGKKRVPRRGPGVA. Positions 25–39 are enriched in basic residues; that stretch reads KKQKHNNGGKKRVPR. The short motif at 40–48 is the SPL element; sequence RGPGVAELE. The short motif at 294-300 is the EAR element; the sequence is IDLRLKL.

As to quaternary structure, interacts with SPL and SPEAR2. As to expression, expressed in leaves.

Its function is as follows. Adapter-like transcriptional repressor recruiting TPL/TPR coepressors to inhibit TCP transcription factors. May be involved in leaf development. The polypeptide is Protein SPEAR4 (Arabidopsis thaliana (Mouse-ear cress)).